We begin with the raw amino-acid sequence, 400 residues long: Acetate kinase (400 aa).

Asn10 lines the Mg(2+) pocket. Lys17 is a binding site for ATP. Residue Arg91 coordinates substrate. Asp150 (proton donor/acceptor) is an active-site residue. ATP-binding positions include 210–214, 285–287, and 333–337; these read HLGNG, DCR, and GIGEN. Glu387 serves as a coordination point for Mg(2+).

Belongs to the acetokinase family. Homodimer. Requires Mg(2+) as cofactor. It depends on Mn(2+) as a cofactor.

Its subcellular location is the cytoplasm. It carries out the reaction acetate + ATP = acetyl phosphate + ADP. It participates in metabolic intermediate biosynthesis; acetyl-CoA biosynthesis; acetyl-CoA from acetate: step 1/2. Catalyzes the formation of acetyl phosphate from acetate and ATP. Can also catalyze the reverse reaction. This is Acetate kinase from Yersinia pseudotuberculosis serotype I (strain IP32953).